The chain runs to 108 residues: MVIYCNWLELKGLLETNDFLYLMRCCYMYDTVSLVSNAPNIYSIPFFYDRICYDYKNILLKYELFIIYYYYYLLICLSPHFFPIKRIRPFHENPLHSFVYRIMISSEA.

Residues 64–84 (LFIIYYYYYLLICLSPHFFPI) form a helical membrane-spanning segment.

The protein resides in the membrane. This is an uncharacterized protein from Schizosaccharomyces pombe (strain 972 / ATCC 24843) (Fission yeast).